A 239-amino-acid polypeptide reads, in one-letter code: Probable transcriptional regulator ycf27 (239 aa).

Residues 7–120 (KILVVDDEIS…ELEARIRSLL (114 aa)) form the Response regulatory domain. Position 56 is a 4-aspartylphosphate (Asp-56). Positions 76 to 94 (DIPIIMLTALGDVADRITG) form a DNA-binding region, H-T-H motif. The segment at residues 135–236 (GENLQIGFLK…ARGIGYLFQN (102 aa)) is a DNA-binding region (ompR/PhoB-type).

It is found in the plastid. The protein resides in the cyanelle. In terms of biological role, probable promoter-specific protein mediating the interaction between DNA and RNA polymerase. The protein is Probable transcriptional regulator ycf27 (ycf27) of Cyanophora paradoxa.